A 26-amino-acid chain; its full sequence is Somatostatin-1 (26 aa).

Residues Cys15 and Cys26 are joined by a disulfide bond.

This sequence belongs to the somatostatin family.

It localises to the secreted. Somatostatin inhibits the release of somatotropin. The polypeptide is Somatostatin-1 (sst1) (Amia calva (Bowfin)).